Here is a 288-residue protein sequence, read N- to C-terminus: 4-diphosphocytidyl-2-C-methyl-D-erythritol kinase (288 aa).

Lys8 is a catalytic residue. 90 to 100 is a binding site for ATP; it reads PVGAGLAGGSS. Residue Asp132 is part of the active site.

The protein belongs to the GHMP kinase family. IspE subfamily.

It carries out the reaction 4-CDP-2-C-methyl-D-erythritol + ATP = 4-CDP-2-C-methyl-D-erythritol 2-phosphate + ADP + H(+). It functions in the pathway isoprenoid biosynthesis; isopentenyl diphosphate biosynthesis via DXP pathway; isopentenyl diphosphate from 1-deoxy-D-xylulose 5-phosphate: step 3/6. In terms of biological role, catalyzes the phosphorylation of the position 2 hydroxy group of 4-diphosphocytidyl-2C-methyl-D-erythritol. In Chlamydia trachomatis serovar A (strain ATCC VR-571B / DSM 19440 / HAR-13), this protein is 4-diphosphocytidyl-2-C-methyl-D-erythritol kinase.